A 76-amino-acid chain; its full sequence is UPF0346 protein LBA0976 (76 aa).

It belongs to the UPF0346 family.

This is UPF0346 protein LBA0976 from Lactobacillus acidophilus (strain ATCC 700396 / NCK56 / N2 / NCFM).